Consider the following 395-residue polypeptide: F-box protein At5g46170 (395 aa).

An F-box domain is found at 24-72; it reads IDHFDHLPDSILLLVFNKIGDVKALGRCCVVSRRFHSLVPQVDNVVVRV. The interval 122-158 is disordered; sequence TKRSSSSCGGSGSSSSSLSISGDDDGGEIEQGGVTHH. The segment covering 125-142 has biased composition (low complexity); sequence SSSSCGGSGSSSSSLSIS.

The chain is F-box protein At5g46170 from Arabidopsis thaliana (Mouse-ear cress).